Consider the following 1218-residue polypeptide: MMPATRRSASVLVSARGSAARFPASSVSFLHKGAADVCRRFSASLSPFSCSAFVSPSCPMASSSPFSPPLFSSLVSSPSSPSAGFPRSASSSASSAPPCSSAGVSKVSCLKLSCGERQQEGEPSLPRSAEERKATNRRELECLRALQSAVAEREAEADGGWTTWRGVSQRTWKQKRPALLSSRVTAAMSLEEEDSTSGPRGYEEERERRSGVCGERGQNGGEKLGRVQGVSTGDSESRTRCRRGLHFSPQTNRSFVVLLSCLLFFLVGEVQEVCLPSLQRMESSTDFFFFKIASAEAHTANPGDSSKSRRRSPRSSRFTSKASSDSSSSSRSSADSSSSSRSSADSSSSSRSSADSSSSHPSSSSSSPLSSSPDSSPEEVNGLRGRARVWTRRGGLSSRLREFLSDASALRSQESAADAVEEARARVRLLSRFARSRRQTLEALGGKSRRSEWRRKRTGMMASEARESHRGRDLNTLADREKKALKSALLAAQLSRRRMQSIQSERSLYSLVRPLLDESDAAGVYTANECVAVRYADYPKEFPGYDISTESCRCPDGWLPCAESDAVARMSAWEPVIWEENADEGCTSERGEVMLEHMNFYSCPQRTFVEYTGPRDATIRDKQCKRVAFVLCRAATSSCITGPWSEWTSCSVPCGEGYQYRWRIPVTGASSSTDKGAVTQRSSREACAPYHMEERRKCNLGACPEKITKTTCFWTTVQVDRAEGAFDEDQGSCKCGTGDDAIDREEGAMVPCTPEEAVASMDNWKSHFRQHCYTSLGLRRRSNLALRFHSYGHVVRLGLRDLWHLDCTGGWSKFNIFEAKMFCGVGAKILCRSRTDSAQVPFSMEQHNAESDAVTRISMLLKRQRRVEEASPQAFAEESLLLSEGGVSHLWISLCAGAVAAVVFLVCLTKRAAVGTFLRSRVSTATAGGETVSAKGSTRGSRNAGRRVFSAQAVREAVEERVHAFVAFARRQTTAVILATEKWMETAAEREVTQEMQGVSTASLRLLERDCKEREERDSARKSCPQEAKGLLEGEEDVPALLVFPALKTATDRVVRVARSTLSLETRSFSGAQRSAQRLWGKVRSIFLARGKEKRDEDLFYGEEGERGRIQRGGPAAFVSSLACQKVERRRARRGRREGDSGEGGDCGEARKANSGVAGRLDSLTEMERDDSFVLSAVEEKLLFPRGKRNTQEKLARINKAARTAAVSAVTPESFGSM.

Disordered regions lie at residues Ser82–Ser101, Ser189–Arg240, His298–Leu383, and Gly445–Gly471. A compositionally biased stretch (basic and acidic residues) spans Gly201–Ser210. Residues Ser315–Ser375 are compositionally biased toward low complexity. A TSP type-1 domain is found at Ser638–Pro704. Residues Gly886–Val906 traverse the membrane as a helical segment. Residues Arg1129 to Ala1153 are disordered.

In terms of assembly, component of a complex, at least composed of cysteine repeat modular protein A (CRMPa), cysteine repeat modular protein B (CRMPb), micronemal protein 15 (MIC15) and thrombospondin type 1 domain-containing protein (TSP1).

The protein resides in the membrane. Required for rhoptry secretion. Plays a role in host cell invasion. This is Thrombospondin type 1 domain-containing protein from Toxoplasma gondii.